We begin with the raw amino-acid sequence, 948 residues long: 3-hydroxy-3-methylglutaryl-coenzyme A reductase (948 aa).

6 helical membrane passes run 9 to 25 (LLFF…VLLI), 55 to 71 (VIIF…VLTC), 96 to 112 (LILF…VLFV), 124 to 140 (TSVF…FIVL), 207 to 223 (IIYI…FMRI), and 286 to 302 (CWST…ILHL). An N-linked (GlcNAc...) asparagine glycan is attached at Asn-316. The chain crosses the membrane as a helical span at residues 347–363 (VINANLVVYLFLGLFLF). Residues 364–466 (KRIRLNKPIN…MLTEKIKQGL (103 aa)) are linker. Asn-430 carries an N-linked (GlcNAc...) asparagine glycan. Residues 467 to 948 (GHELSDTEIL…VNPEISHYTM (482 aa)) form a catalytic region. Active-site charge relay system residues include Glu-567, Lys-699, and Asp-777. The active-site Proton donor is the His-869. The N-linked (GlcNAc...) asparagine glycan is linked to Asn-895.

This sequence belongs to the HMG-CoA reductase family.

It is found in the endoplasmic reticulum membrane. It localises to the peroxisome membrane. It catalyses the reaction (R)-mevalonate + 2 NADP(+) + CoA = (3S)-3-hydroxy-3-methylglutaryl-CoA + 2 NADPH + 2 H(+). Its pathway is metabolic intermediate biosynthesis; (R)-mevalonate biosynthesis; (R)-mevalonate from acetyl-CoA: step 3/3. This transmembrane glycoprotein is involved in the control of cholesterol and nonsterol isoprenoid compounds biosynthesis. It is the rate-limiting enzyme of sterol biosynthesis. The polypeptide is 3-hydroxy-3-methylglutaryl-coenzyme A reductase (Schistosoma mansoni (Blood fluke)).